A 363-amino-acid chain; its full sequence is Pyruvate dehydrogenase E1 component subunit alpha, mitochondrial (363 aa).

A mitochondrion-targeting transit peptide spans 1 to 2 (RN). Position 36 is an N6-acetyllysine; alternate (K36). An N6-succinyllysine; alternate modification is found at K36. Positions 65, 91, 92, 130, 138, 140, 169, 170, 171, 198, and 200 each coordinate pyruvate. The thiamine diphosphate site is built by Y91 and R92. The thiamine diphosphate site is built by G138, V140, D169, G170, A171, and N198. D169 is a binding site for Mg(2+). 2 residues coordinate Mg(2+): N198 and Y200. Phosphoserine; by PDK1 is present on S205. An N6-acetyllysine; alternate modification is found at K217. K217 bears the N6-succinyllysine; alternate mark. The residue at position 240 (K240) is an N6-acetyllysine. Residue K250 is modified to N6-succinyllysine. Residue H265 participates in thiamine diphosphate binding. At S266 the chain carries Phosphoserine; by PDK1, PDK2, PDK3 and PDK4. At S268 the chain carries Phosphoserine. S273 is subject to Phosphoserine; by PDK1, PDK2, PDK3 and PDK4. Y274 carries the phosphotyrosine modification. K286 bears the N6-acetyllysine; alternate mark. N6-succinyllysine; alternate is present on K286. N6-acetyllysine occurs at positions 294 and 309. K358 is subject to N6-succinyllysine.

As to quaternary structure, heterotetramer of two PDHA1 and two PDHB subunits. The heterotetramer interacts with DLAT, and is part of the multimeric pyruvate dehydrogenase complex that contains multiple copies of pyruvate dehydrogenase (E1), dihydrolipoamide acetyltransferase (DLAT, E2) and lipoamide dehydrogenase (DLD, E3). These subunits are bound to an inner core composed of about 48 DLAT and 12 PDHX molecules. Thiamine diphosphate serves as cofactor. The cofactor is Mg(2+). Post-translationally, phosphorylation at Ser-205, Ser-266 and Ser-273 by PDK family kinases inactivates the enzyme; for this phosphorylation at a single site is sufficient. Phosphorylation at Ser-266 interferes with access to active site, and thereby inactivates the enzyme. Dephosphorylation at all three sites, i.e. at Ser-205, Ser-266 and Ser-273, is required for reactivation. In terms of processing, acetylation alters the phosphorylation pattern. Deacetylated by SIRT3.

The protein resides in the mitochondrion matrix. It catalyses the reaction N(6)-[(R)-lipoyl]-L-lysyl-[protein] + pyruvate + H(+) = N(6)-[(R)-S(8)-acetyldihydrolipoyl]-L-lysyl-[protein] + CO2. With respect to regulation, pyruvate dehydrogenase activity is inhibited by phosphorylation of PDHA1; it is reactivated by dephosphorylation. Functionally, the pyruvate dehydrogenase complex catalyzes the overall conversion of pyruvate to acetyl-CoA and CO(2), and thereby links the glycolytic pathway to the tricarboxylic cycle. This Sminthopsis macroura (Stripe-faced dunnart) protein is Pyruvate dehydrogenase E1 component subunit alpha, mitochondrial (PDHA).